The chain runs to 198 residues: Nucleoid occlusion factor SlmA (198 aa).

The HTH tetR-type domain occupies 10-70 (NRREEILQSL…SLIEFIEDSL (61 aa)). The segment at residues 33–52 (TTAKLAASVGVSEAALYRHF) is a DNA-binding region (H-T-H motif). Positions 117-144 (EQDRLQGRINQLFERIEAQLRQVLREKR) form a coiled coil.

Belongs to the nucleoid occlusion factor SlmA family. Homodimer. Interacts with FtsZ.

It is found in the cytoplasm. Its subcellular location is the nucleoid. Its function is as follows. Required for nucleoid occlusion (NO) phenomenon, which prevents Z-ring formation and cell division over the nucleoid. Acts as a DNA-associated cell division inhibitor that binds simultaneously chromosomal DNA and FtsZ, and disrupts the assembly of FtsZ polymers. SlmA-DNA-binding sequences (SBS) are dispersed on non-Ter regions of the chromosome, preventing FtsZ polymerization at these regions. The polypeptide is Nucleoid occlusion factor SlmA (Escherichia coli O45:K1 (strain S88 / ExPEC)).